The chain runs to 609 residues: Cell division protein DipM (609 aa).

Positions 1–24 are cleaved as a signal peptide; sequence MRQLWTQAAVIALTAGTLGAPAHA. Residues 21–103 are disordered; the sequence is PAHASGQSGQ…PVLRATPPRT (83 aa). Positions 25-38 are enriched in polar residues; sequence SGQSGQRFTPNFPI. Residues 79-93 are compositionally biased toward pro residues; the sequence is LPPPAPVSTPAPAPQ. 2 consecutive LysM domains span residues 121-165 and 171-215; these read QVRV…KIKG and KAYV…KLLL. Low complexity-rich tracts occupy residues 242 to 258 and 265 to 280; these read AEPA…AATP and PVSE…STTT. The segment at 242 to 280 is disordered; sequence AEPAPATTRPATPAATPSRPVRQPVSEETSEPATTSTTT. 2 LysM domains span residues 295–339 and 345–389; these read QVHT…KIKG and KAYS…KIAL. Residues 389–457 are disordered; it reads LPDGFRDKGP…AAQPITPPPS (69 aa). A compositionally biased stretch (low complexity) spans 400–429; the sequence is RTTTTTRPATPPANTYARVDSSAAAASTPS. The interval 503–603 is lytM; sequence NDGLNIRAPQ…VKDKAKPVDP (101 aa).

It is found in the periplasm. In terms of biological role, required for efficient cell division, cell polarity and normal cell morphology. Facilitates remodeling of the peptidoglycan layer and, thus, coordinated constriction of the cell envelope during the division process. Plays a critical role in maintaining proper cell envelope architecture during growth and division. Required for normal envelope invagination during cell division and to establish or maintain outer membrane connections throughout the cell envelope. May serve as a regulatory hub coordinating the activities of multiple peptidoglycan-degrading enzymes during cell constriction. Required to position SdpA and SdpB at midcell. The sequence is that of Cell division protein DipM from Caulobacter vibrioides (strain NA1000 / CB15N) (Caulobacter crescentus).